The chain runs to 194 residues: Outer surface 22 kDa lipoprotein (194 aa).

Residues 1-21 (MYKNGFFKNYLSLLLIFLVIA) form the signal peptide. Residue Cys22 is the site of N-palmitoyl cysteine attachment. Cys22 carries S-diacylglycerol cysteine lipidation.

Its subcellular location is the cell outer membrane. The chain is Outer surface 22 kDa lipoprotein (p22) from Borreliella burgdorferi (strain N40) (Borrelia burgdorferi).